Here is a 338-residue protein sequence, read N- to C-terminus: Tryptophan--tRNA ligase (338 aa).

Residues 11–13 (QPS) and 19–20 (GN) contribute to the ATP site. A 'HIGH' region motif is present at residues 12–20 (PSGELSIGN). Residue D135 coordinates L-tryptophan. ATP contacts are provided by residues 147-149 (GSD), V189, and 198-202 (KMSKS). The 'KMSKS' region signature appears at 198 to 202 (KMSKS).

It belongs to the class-I aminoacyl-tRNA synthetase family. Homodimer.

It is found in the cytoplasm. The enzyme catalyses tRNA(Trp) + L-tryptophan + ATP = L-tryptophyl-tRNA(Trp) + AMP + diphosphate + H(+). Functionally, catalyzes the attachment of tryptophan to tRNA(Trp). The protein is Tryptophan--tRNA ligase of Vibrio parahaemolyticus serotype O3:K6 (strain RIMD 2210633).